A 530-amino-acid polypeptide reads, in one-letter code: Asc-type amino acid transporter 1 (530 aa).

The tract at residues 1-36 is disordered; the sequence is MRRDSDMASHIQQPGGHGNPGPAPSPSPGPGPGPGA. A compositionally biased stretch (pro residues) spans 21 to 33; that stretch reads GPAPSPSPGPGPG. 10 consecutive transmembrane segments (helical) span residues 46-66, 78-98, 119-139, 192-212, 274-294, 316-336, 368-388, 394-414, 430-450, and 454-474; these read IGLV…GIFI, VGLA…GSLC, IFGG…MYPT, IQVI…TVGF, AIFI…VAYF, LLGY…FGGI, CTPI…MLVG, INYV…GLLV, LLVP…SFIS, and VCGV…LGVF. The tract at residues 508–530 is disordered; that stretch reads EEENGPMGQPSPLPITDKPLKTQ.

The protein belongs to the amino acid-polyamine-organocation (APC) superfamily. In terms of assembly, disulfide-linked heterodimer with the amino acid transport protein SLC3A2/4F2hc.

The protein localises to the cell membrane. The catalysed reaction is L-alanine(in) + glycine(out) = L-alanine(out) + glycine(in). The enzyme catalyses L-serine(out) + L-alanine(in) = L-serine(in) + L-alanine(out). It carries out the reaction L-threonine(out) + L-alanine(in) = L-threonine(in) + L-alanine(out). It catalyses the reaction L-cysteine(out) + L-alanine(in) = L-cysteine(in) + L-alanine(out). The catalysed reaction is 2-aminoisobutanoate(out) + L-alanine(in) = 2-aminoisobutanoate(in) + L-alanine(out). The enzyme catalyses D-serine(out) + L-alanine(in) = D-serine(in) + L-alanine(out). It carries out the reaction D-alanine(out) + L-alanine(in) = D-alanine(in) + L-alanine(out). It catalyses the reaction L-valine(out) + L-alanine(in) = L-valine(in) + L-alanine(out). The catalysed reaction is L-methionine(out) + L-alanine(in) = L-methionine(in) + L-alanine(out). The enzyme catalyses beta-alanine(out) + L-alanine(in) = beta-alanine(in) + L-alanine(out). It carries out the reaction D-cysteine(out) + L-alanine(in) = D-cysteine(in) + L-alanine(out). It catalyses the reaction D-threonine(out) + L-alanine(in) = D-threonine(in) + L-alanine(out). The catalysed reaction is D-isoleucine(out) + D-serine(in) = D-isoleucine(in) + D-serine(out). The enzyme catalyses D-serine(in) = D-serine(out). Functionally, associates with SLC3A2/4F2hc to form a functional heterodimeric complex that translocates small neutral L- and D-amino acids across the plasma membrane. Preferentially mediates exchange transport, but can also operate via facilitated diffusion. Acts as a major transporter for glycine, L- and D-serine in the central nervous system. At the spinal cord and brainstem regulates glycine metabolism and glycinergic inhibitory neurotransmission by providing for glycine de novo synthesis from L-serine and glycine recycling from astrocytes to glycinergic motor neurons. At Schaffer collateral-CA1 synapses mediates D-serine and glycine release that modulates post-synaptic activation of NMDA receptors and excitatory glutamatergic transmission. May regulate D-serine release from mesenchymal progenitors located in developing subcutaneous adipose tissue, favoring white adipocyte over thermogenic beige adipocyte lineage commitment. The chain is Asc-type amino acid transporter 1 (Slc7a10) from Rattus norvegicus (Rat).